The sequence spans 502 residues: Protein YdgA (502 aa).

Positions 1–19 (MNKSLVAVGVIVALGVVWT) are cleaved as a signal peptide.

To E.coli YihF and H.influenzae HI_1236. As to quaternary structure, homodimer.

The protein localises to the cell inner membrane. The chain is Protein YdgA (ydgA) from Escherichia coli (strain K12).